The primary structure comprises 624 residues: (-)-beta-phellandrene synthase 4, chloroplastic (624 aa).

Residues 1–48 (MAIVSSVPLASKSCLHKSLISSIHKLKPFCRTIPTLGMSRPGKSVMPS) constitute a chloroplast transit peptide. The disordered stretch occupies residues 41-60 (PGKSVMPSMSMSSPVSDDGV). A compositionally biased stretch (low complexity) spans 44 to 56 (SVMPSMSMSSPVS). Residues aspartate 375, aspartate 379, and aspartate 527 each coordinate Mg(2+). A DDXXD motif motif is present at residues 375 to 379 (DDMYD).

This sequence belongs to the terpene synthase family. Tpsd subfamily. Mg(2+) serves as cofactor. It depends on Mn(2+) as a cofactor.

The protein localises to the plastid. The protein resides in the chloroplast. It carries out the reaction (2E)-geranyl diphosphate = (-)-beta-phellandrene + diphosphate. Its pathway is terpene metabolism; oleoresin biosynthesis. Functionally, terpene synthase (TPS) involved in the biosynthesis of monoterpene natural products included in conifer oleoresin secretions and volatile emissions; these compounds contribute to biotic and abiotic stress defense against herbivores and pathogens. Catalyzes the conversion of (2E)-geranyl diphosphate (GPP) to (-)-beta-phellandrene. This chain is (-)-beta-phellandrene synthase 4, chloroplastic, found in Picea sitchensis (Sitka spruce).